Here is a 479-residue protein sequence, read N- to C-terminus: Xylose isomerase (479 aa).

H144 is an active-site residue. Mn(2+) contacts are provided by E275, E311, H314, D339, D350, D352, and Y382.

The protein belongs to the xylose isomerase family. As to quaternary structure, homodimer. The cofactor is Mn(2+).

The enzyme catalyses alpha-D-xylose = alpha-D-xylulofuranose. This is Xylose isomerase (XYLA) from Hordeum vulgare (Barley).